Consider the following 118-residue polypeptide: Succinate dehydrogenase assembly factor 1, mitochondrial (118 aa).

Positions 14 to 16 (LYR) match the LYR motif 1; required for interaction with HSC20 motif. An LYR motif 2; not required for interaction with HSC20 motif is present at residues 53–55 (LYR). The tract at residues 53 to 65 (LYRRGRRQLQMLR) is interaction with SDHB. The disordered stretch occupies residues 72–118 (MGAFVRTRGPTEESNGAGAPGTLSGEGDDPRKPLDSMRTPKTPLDGR).

Belongs to the complex I LYR family. SDHAF1 subfamily. Interacts with SDHB within an SDHA-SDHB subcomplex. Also interacts with the iron-sulfur transfer complex formed by HSC20, HSPA9 and ISCU through direct binding to HSC20. Binding of SDHAF1 to SDHB precedes and is necessary for recruitment of the iron-sulfur transfer complex by SDHAF1.

Its subcellular location is the mitochondrion matrix. Functionally, plays an essential role in the assembly of succinate dehydrogenase (SDH), an enzyme complex (also referred to as respiratory complex II) that is a component of both the tricarboxylic acid (TCA) cycle and the mitochondrial electron transport chain, and which couples the oxidation of succinate to fumarate with the reduction of ubiquinone (coenzyme Q) to ubiquinol. Promotes maturation of the iron-sulfur protein subunit SDHB of the SDH catalytic dimer, protecting it from the deleterious effects of oxidants. May act together with SDHAF3. Contributes to iron-sulfur cluster incorporation into SDHB by binding to SDHB and recruiting the iron-sulfur transfer complex formed by HSC20, HSPA9 and ISCU through direct binding to HSC20. In Bos taurus (Bovine), this protein is Succinate dehydrogenase assembly factor 1, mitochondrial.